The sequence spans 78 residues: DNA-directed RNA polymerase subunit omega (78 aa).

It belongs to the RNA polymerase subunit omega family. In cyanobacteria the RNAP catalytic core is composed of 2 alpha, 1 beta, 1 beta', 1 gamma and 1 omega subunit. When a sigma factor is associated with the core the holoenzyme is formed, which can initiate transcription.

It carries out the reaction RNA(n) + a ribonucleoside 5'-triphosphate = RNA(n+1) + diphosphate. Promotes RNA polymerase assembly. Latches the N- and C-terminal regions of the beta' subunit thereby facilitating its interaction with the beta and alpha subunits. This chain is DNA-directed RNA polymerase subunit omega, found in Prochlorococcus marinus (strain MIT 9312).